A 165-amino-acid chain; its full sequence is Peptide deformylase (165 aa).

The Fe cation site is built by Cys93 and His135. The active site involves Glu136. Position 139 (His139) interacts with Fe cation.

The protein belongs to the polypeptide deformylase family. It depends on Fe(2+) as a cofactor.

The enzyme catalyses N-terminal N-formyl-L-methionyl-[peptide] + H2O = N-terminal L-methionyl-[peptide] + formate. In terms of biological role, removes the formyl group from the N-terminal Met of newly synthesized proteins. Requires at least a dipeptide for an efficient rate of reaction. N-terminal L-methionine is a prerequisite for activity but the enzyme has broad specificity at other positions. This Thermodesulfovibrio yellowstonii (strain ATCC 51303 / DSM 11347 / YP87) protein is Peptide deformylase.